We begin with the raw amino-acid sequence, 73 residues long: RNA-binding protein Hfq (73 aa).

The region spanning 8-68 (DQFLNQIRKE…ISTFAPQKNV (61 aa)) is the Sm domain.

This sequence belongs to the Hfq family. In terms of assembly, homohexamer.

Functionally, RNA chaperone that binds small regulatory RNA (sRNAs) and mRNAs to facilitate mRNA translational regulation in response to envelope stress, environmental stress and changes in metabolite concentrations. Also binds with high specificity to tRNAs. This chain is RNA-binding protein Hfq, found in Bacillus subtilis (strain 168).